The following is a 350-amino-acid chain: Tsukushi (350 aa).

Residues 1–17 (MAPSWLFLLFIPGMVGS) form the signal peptide. Residues 18–59 (SRSCFPGCQCIVDNFGLFHSFSLTKVDCSGVGPHVVPVSIPL) form the LRRNT domain. LRR repeat units follow at residues 60 to 81 (DTSYLDLSANGIKRINESVLSG), 86 to 107 (TLINLNLSHNQIVRISFSTFSK), 110 to 131 (YLESLDLSHNLLETLPDGSFLY), 133 to 154 (RLTELDLSSNKLLEVGIGAFTL), 159 to 180 (RSMTINLGNNNIRSIHRGAERP), 183 to 203 (NIHSLTLSGNDLLSVPDLHGI), 204 to 225 (PLRHLDLDRNPLAKIEKESFLG), 228 to 250 (GLTHLSLSDLPNLREVSPYSFKT), 253 to 275 (SLLDLDLSSNPQLKSLSSDMFFG), and 278 to 299 (SLQELNLAYSGVAALPKDIMLN). Residues Asn75 and Asn91 are each glycosylated (N-linked (GlcNAc...) asparagine).

In terms of assembly, interacts with bmp4. Interacts with dll1 (via extracellular region). Interacts with fgf8; inhibits fgf8 signaling. Interacts with nodal2/Xnr2; enhances nodal2 activity.

Its subcellular location is the secreted. Contributes to various developmental events through its interactions with multiple signaling pathways. Dorsalizing factor which functions as an inhibitor of bone morphogenetic proteins (BMP) during gastrulation. Promotes dll1-dependent activation of Notch signaling and is required for neural crest formation. Induces endoderm and dorsal mesoderm formation by enhancing nodal2/Xnr2 activity while inhibiting ventrolateral mesoderm formation through inhibition of fgf8. The polypeptide is Tsukushi (tsku) (Xenopus tropicalis (Western clawed frog)).